A 137-amino-acid polypeptide reads, in one-letter code: Keratin-associated protein 15-1 (137 aa).

Belongs to the PMG family. As to quaternary structure, interacts with hair keratins.

Its function is as follows. In the hair cortex, hair keratin intermediate filaments are embedded in an interfilamentous matrix, consisting of hair keratin-associated proteins (KRTAP), which are essential for the formation of a rigid and resistant hair shaft through their extensive disulfide bond cross-linking with abundant cysteine residues of hair keratins. The matrix proteins include the high-sulfur and high-glycine-tyrosine keratins. This Homo sapiens (Human) protein is Keratin-associated protein 15-1 (KRTAP15-1).